The sequence spans 361 residues: Molybdopterin synthase catalytic subunit (361 aa).

Residues 101-102, Lys-117, and 124-126 each bind substrate; these read HR and KKE.

Belongs to the MoaE family. MOCS2B subfamily. Heterotetramer; composed of 2 small (Mocs2A) and 2 large (Mocs2B) subunits.

Its subcellular location is the cytoplasm. It carries out the reaction 2 [molybdopterin-synthase sulfur-carrier protein]-C-terminal-Gly-aminoethanethioate + cyclic pyranopterin phosphate + H2O = molybdopterin + 2 [molybdopterin-synthase sulfur-carrier protein]-C-terminal Gly-Gly + 2 H(+). The protein operates within cofactor biosynthesis; molybdopterin biosynthesis. Catalytic subunit of the molybdopterin synthase complex, a complex that catalyzes the conversion of precursor Z into molybdopterin. Acts by mediating the incorporation of 2 sulfur atoms from thiocarboxylated Mocs2A into precursor Z to generate a dithiolene group. In Drosophila persimilis (Fruit fly), this protein is Molybdopterin synthase catalytic subunit.